Consider the following 603-residue polypeptide: NADH-ubiquinone oxidoreductase chain 5 (603 aa).

14 helical membrane-spanning segments follow: residues 4–24 (YTSI…ATLV), 36–56 (VKTT…LYIF), 87–107 (MMFI…SLWY), 122–142 (LIFL…QLFI), 171–191 (AVLY…WFLL), 211–233 (LPLM…HPWL), 241–261 (TPVS…FLLI), 272–292 (LTQN…AMCA), 301–320 (IVAF…IGIN), 325–347 (AFLH…GSII), 370–390 (STSL…TGFY), 406–422 (AWAL…TSAY), 488–508 (LLAL…TLMT), and 583–603 (MIKL…LLMV).

Belongs to the complex I subunit 5 family. Core subunit of respiratory chain NADH dehydrogenase (Complex I) which is composed of 45 different subunits.

It localises to the mitochondrion inner membrane. It catalyses the reaction a ubiquinone + NADH + 5 H(+)(in) = a ubiquinol + NAD(+) + 4 H(+)(out). In terms of biological role, core subunit of the mitochondrial membrane respiratory chain NADH dehydrogenase (Complex I) which catalyzes electron transfer from NADH through the respiratory chain, using ubiquinone as an electron acceptor. Essential for the catalytic activity and assembly of complex I. The protein is NADH-ubiquinone oxidoreductase chain 5 (MT-ND5) of Papio hamadryas (Hamadryas baboon).